Consider the following 532-residue polypeptide: Flavin-containing monooxygenase 3 (532 aa).

FAD-binding positions include 9–13 (GAGVS), Glu32, 40–41 (LW), and 61–62 (NS). NADP(+) contacts are provided by residues 60–61 (SN) and 195–198 (SGCD). Residue Ser401 is modified to Phosphoserine. The helical transmembrane segment at 510–530 (FFFHWLKLFAIPILLIAVFLV) threads the bilayer.

This sequence belongs to the FMO family. FAD is required as a cofactor.

Its subcellular location is the microsome membrane. It is found in the endoplasmic reticulum membrane. It carries out the reaction trimethylamine + NADPH + O2 = trimethylamine N-oxide + NADP(+) + H2O. It catalyses the reaction N,N-dimethylaniline + NADPH + O2 + H(+) = N,N-dimethylaniline N-oxide + NADP(+) + H2O. The enzyme catalyses hypotaurine + NADPH + O2 + H(+) = taurine + NADP(+) + H2O. The catalysed reaction is (S)-nicotine + NADPH + O2 = trans-(S)-nicotine N(1')-oxide + NADP(+) + H2O. It carries out the reaction albendazole + NADPH + O2 + H(+) = albendazole S-oxide + NADP(+) + H2O. Essential hepatic enzyme that catalyzes the oxygenation of a wide variety of nitrogen- and sulfur-containing compounds including drugs as well as dietary compounds. Plays an important role in the metabolism of trimethylamine (TMA), via the production of trimethylamine N-oxide (TMAO) metabolite. TMA is generated by the action of gut microbiota using dietary precursors such as choline, choline containing compounds, betaine or L-carnitine. By regulating TMAO concentration, FMO3 directly impacts both platelet responsiveness and rate of thrombus formation. The protein is Flavin-containing monooxygenase 3 (FMO3) of Pan troglodytes (Chimpanzee).